Consider the following 440-residue polypeptide: NADH-quinone oxidoreductase subunit D (440 aa).

Belongs to the complex I 49 kDa subunit family. NDH-1 is composed of 14 different subunits. Subunits NuoB, C, D, E, F, and G constitute the peripheral sector of the complex.

The protein resides in the cell membrane. The catalysed reaction is a quinone + NADH + 5 H(+)(in) = a quinol + NAD(+) + 4 H(+)(out). Its function is as follows. NDH-1 shuttles electrons from NADH, via FMN and iron-sulfur (Fe-S) centers, to quinones in the respiratory chain. The immediate electron acceptor for the enzyme in this species is believed to be a menaquinone. Couples the redox reaction to proton translocation (for every two electrons transferred, four hydrogen ions are translocated across the cytoplasmic membrane), and thus conserves the redox energy in a proton gradient. The protein is NADH-quinone oxidoreductase subunit D of Mycobacterium bovis (strain ATCC BAA-935 / AF2122/97).